A 179-amino-acid polypeptide reads, in one-letter code: Large ribosomal subunit protein uL6 (179 aa).

This sequence belongs to the universal ribosomal protein uL6 family. In terms of assembly, part of the 50S ribosomal subunit.

Its function is as follows. This protein binds to the 23S rRNA, and is important in its secondary structure. It is located near the subunit interface in the base of the L7/L12 stalk, and near the tRNA binding site of the peptidyltransferase center. This chain is Large ribosomal subunit protein uL6, found in Mycobacterium tuberculosis (strain ATCC 25618 / H37Rv).